The following is a 299-amino-acid chain: GTPase Era (299 aa).

Positions 5–175 constitute an Era-type G domain; sequence RSGFVCFVGR…TNVLVSQLPP (171 aa). The tract at residues 13–20 is G1; sequence GRPNTGKS. Residue 13 to 20 coordinates GTP; sequence GRPNTGKS. The interval 39–43 is G2; sequence QTTRH. Residues 60 to 63 are G3; it reads DTPG. GTP is bound by residues 60–64 and 124–127; these read DTPGL and TKID. The tract at residues 124–127 is G4; sequence TKID. The interval 154–156 is G5; the sequence is VSA. Positions 206–285 constitute a KH type-2 domain; that stretch reads VRDELPHSLA…YLDLRVKIAK (80 aa).

This sequence belongs to the TRAFAC class TrmE-Era-EngA-EngB-Septin-like GTPase superfamily. Era GTPase family. Monomer. Stays in the monomer conformation, irrespective of the presence of GTP.

The protein localises to the cell envelope. Its subcellular location is the secreted. It localises to the cell wall. With respect to regulation, co-purified with RNA upon overexpression in E.coli, but RNAs do not appear to influence the GTPase activity. In terms of biological role, exhibits GTPase activity. Binds RNA but is probably not involved in ribosome assembly in mycobacteria. Cannot use ATP. The protein is GTPase Era of Mycolicibacterium smegmatis (strain ATCC 700084 / mc(2)155) (Mycobacterium smegmatis).